Reading from the N-terminus, the 463-residue chain is Glycerol-3-phosphate acyltransferase, chloroplastic (463 aa).

The N-terminal 91 residues, 1 to 91, are a transit peptide targeting the chloroplast; sequence MSIFFSPSSP…AATQPSAGSD (91 aa). Disordered stretches follow at residues 18–37 and 65–95; these read NANP…TPPL and AETV…HGHS. 2 stretches are compositionally biased toward low complexity: residues 24-37 and 74-90; these read SPSS…TPPL and PSPS…SAGS. Residues 229-234 carry the HXXXXD motif motif; that stretch reads HQTEAD.

It belongs to the GPAT/DAPAT family.

It is found in the plastid. Its subcellular location is the chloroplast stroma. It carries out the reaction sn-glycerol 3-phosphate + an acyl-CoA = a 1-acyl-sn-glycero-3-phosphate + CoA. The protein operates within phospholipid metabolism; CDP-diacylglycerol biosynthesis; CDP-diacylglycerol from sn-glycerol 3-phosphate: step 1/3. Its function is as follows. Esterifies acyl-group from acyl-ACP to the sn-1 position of glycerol-3-phosphate. The enzyme from chilling-resistant plants discriminates against non-fluid palmitic acid and selects oleic acid whereas the enzyme from sensitive plants accepts both fatty acids. The sequence is that of Glycerol-3-phosphate acyltransferase, chloroplastic from Carthamus tinctorius (Safflower).